We begin with the raw amino-acid sequence, 427 residues long: Putative B3 domain-containing protein Os04g0346900 (427 aa).

2 consecutive DNA-binding regions (TF-B3) follow at residues 25–118 (LVPS…FDTT) and 140–236 (KPQF…FGPN). The disordered stretch occupies residues 253–309 (TGEQQEAPSFSRRKCNNKKKSRFGEDDGNQQEMPCSRKGSGNKGRTSDRETKRMRKT). Basic residues predominate over residues 263–273 (SRRKCNNKKKS). A DNA-binding region (TF-B3 3) is located at residues 320–427 (WIKKEINEYV…TLWRVDIERC (108 aa)).

The protein resides in the nucleus. The protein is Putative B3 domain-containing protein Os04g0346900 of Oryza sativa subsp. japonica (Rice).